We begin with the raw amino-acid sequence, 263 residues long: HTH-type transcriptional repressor NanR (263 aa).

Positions 1 to 22 are disordered; sequence MGLMNAFDSQTEDSSPAIGRNL. Residues 30 to 98 form the HTH gntR-type domain; it reads KKLSEMVEEE…NGERARVSRP (69 aa). Residues 58-77 constitute a DNA-binding region (H-T-H motif); the sequence is ERELMAFFNVGRPSVREALA.

Belongs to the NanR family.

Functionally, transcriptional repressor that controls expression of the genes required for the catabolism of sialic acids. The chain is HTH-type transcriptional repressor NanR from Shigella dysenteriae serotype 1 (strain Sd197).